Here is an 86-residue protein sequence, read N- to C-terminus: Cyclin-dependent kinase inhibitor 6 (86 aa).

Over residues methionine 1–alanine 15 the composition is skewed to low complexity. A disordered region spans residues methionine 1–glycine 23.

This sequence belongs to the CDI family. ICK/KRP subfamily.

This is Cyclin-dependent kinase inhibitor 6 (KRP6) from Oryza sativa subsp. japonica (Rice).